A 198-amino-acid polypeptide reads, in one-letter code: Holliday junction branch migration complex subunit RuvA (198 aa).

A domain I region spans residues 1-61; that stretch reads MTLYKIGEIV…DYIQQTYGFK (61 aa). The interval 62–139 is domain II; that stretch reads TFKERLLFTD…KIIQNKEVKK (78 aa). Positions 140-144 are flexible linker; the sequence is FDDIT. The domain III stretch occupies residues 144 to 198; that stretch reads TNIKELKQTLNKLGFKASDIDYAVNNISSTKELDLMVEESINLITTQMHANNQTT.

The protein belongs to the RuvA family. Homotetramer. Forms an RuvA(8)-RuvB(12)-Holliday junction (HJ) complex. HJ DNA is sandwiched between 2 RuvA tetramers; dsDNA enters through RuvA and exits via RuvB. An RuvB hexamer assembles on each DNA strand where it exits the tetramer. Each RuvB hexamer is contacted by two RuvA subunits (via domain III) on 2 adjacent RuvB subunits; this complex drives branch migration. In the full resolvosome a probable DNA-RuvA(4)-RuvB(12)-RuvC(2) complex forms which resolves the HJ.

The protein localises to the cytoplasm. The RuvA-RuvB-RuvC complex processes Holliday junction (HJ) DNA during genetic recombination and DNA repair, while the RuvA-RuvB complex plays an important role in the rescue of blocked DNA replication forks via replication fork reversal (RFR). RuvA specifically binds to HJ cruciform DNA, conferring on it an open structure. The RuvB hexamer acts as an ATP-dependent pump, pulling dsDNA into and through the RuvAB complex. HJ branch migration allows RuvC to scan DNA until it finds its consensus sequence, where it cleaves and resolves the cruciform DNA. The protein is Holliday junction branch migration complex subunit RuvA of Mycoplasmopsis synoviae (strain 53) (Mycoplasma synoviae).